The following is a 269-amino-acid chain: Proline-rich protein 7 (269 aa).

At 1–9 the chain is on the extracellular side; that stretch reads MVMSQGTYT. The interval 1–44 is required for interaction with NMDA receptors; sequence MVMSQGTYTFLTCFAGFWLIWGLIVLLCCFCSFLRRRLKRRQEE. The interval 2-39 is required for membrane localization; that stretch reads VMSQGTYTFLTCFAGFWLIWGLIVLLCCFCSFLRRRLK. The chain crosses the membrane as a helical; Signal-anchor for type III membrane protein span at residues 10-30; that stretch reads FLTCFAGFWLIWGLIVLLCCF. Residues 31–269 lie on the Cytoplasmic side of the membrane; the sequence is CSFLRRRLKR…IPLFGRTTAV (239 aa). A Phosphoserine modification is found at Ser-64. Disordered stretches follow at residues 64 to 83 and 98 to 128; these read SLAG…RSRL and LLHH…LSVP. The segment covering 108–117 has biased composition (basic residues); that stretch reads AHPHPHHHAL. The segment covering 118–128 has biased composition (pro residues); it reads PHPPPSHLSVP. Residues 146–166 are required for internalization; the sequence is PCYEEAVLMAEPPPPYSEVLT. The tract at residues 146–269 is required for apoptosis induction; the sequence is PCYEEAVLMA…IPLFGRTTAV (124 aa). The short motif at 267-269 is the PDZ-binding element; sequence TAV.

As to quaternary structure, forms a complex with NMDA receptor zeta subunit GRIN1 and epsilon subunit GRIN2B. Interacts with GRIN2B. Interacts with GRIN1; the interaction is reduced upon NMDA receptor activity. Found in a postsynaptic membrane complex with DLG4 and GRIN1. Interacts with DLG4 (via PDZ3 domain and to lesser degree via PDZ2 domain). Interacts with FBXW7. Found in a complex with JUN and FBXW7. Interacts with JUN and FBXW7; the interaction inhibits ubiquitination-mediated JUN degradation promoting its phosphorylation and transcriptional activity. Interacts with SRC. In terms of processing, palmitoylated. Post-translationally, tyrosine phosphorylated, possibly by SRC. In terms of tissue distribution, expressed in brain. Expressed in the cerebral cortex and especially in hippocampal neural cells (at protein level).

The protein resides in the cell membrane. Its subcellular location is the postsynaptic cell membrane. It localises to the postsynaptic density membrane. The protein localises to the cytoplasm. It is found in the perinuclear region. The protein resides in the synapse. Its subcellular location is the cell projection. It localises to the dendrite. The protein localises to the nucleus. Its function is as follows. Acts as a synapse-to-nucleus messenger to promote NMDA receptor-mediated excitotoxicity in neurons in a JUN-dependent manner. Inhibits ubiquitination-mediated degradation and promotes phosphorylation and transcriptional activity of transcription factor JUN. Might play a redundant role in the regulation of T cell receptor signaling. Might promote apoptosis in T cells. The chain is Proline-rich protein 7 (Prr7) from Rattus norvegicus (Rat).